We begin with the raw amino-acid sequence, 379 residues long: Cytochrome b (379 aa).

4 helical membrane passes run 33–53 (FGSL…FLAM), 77–98 (WLIR…FIHV), 113–133 (WNIG…GYVL), and 178–198 (FFAF…VHLL). Heme b contacts are provided by His-83 and His-97. 2 residues coordinate heme b: His-182 and His-196. A ubiquinone is bound at residue His-201. Transmembrane regions (helical) follow at residues 226–246 (IKDL…ALFF), 288–308 (LGGV…PLLN), 320–340 (ITQT…WIGG), and 347–367 (FTTI…ILMP).

It belongs to the cytochrome b family. The cytochrome bc1 complex contains 11 subunits: 3 respiratory subunits (MT-CYB, CYC1 and UQCRFS1), 2 core proteins (UQCRC1 and UQCRC2) and 6 low-molecular weight proteins (UQCRH/QCR6, UQCRB/QCR7, UQCRQ/QCR8, UQCR10/QCR9, UQCR11/QCR10 and a cleavage product of UQCRFS1). This cytochrome bc1 complex then forms a dimer. Heme b serves as cofactor.

It is found in the mitochondrion inner membrane. Its function is as follows. Component of the ubiquinol-cytochrome c reductase complex (complex III or cytochrome b-c1 complex) that is part of the mitochondrial respiratory chain. The b-c1 complex mediates electron transfer from ubiquinol to cytochrome c. Contributes to the generation of a proton gradient across the mitochondrial membrane that is then used for ATP synthesis. The protein is Cytochrome b (MT-CYB) of Akodon aerosus (Highland grass mouse).